The sequence spans 441 residues: Ribosomal protein uS12 methylthiotransferase RimO (441 aa).

In terms of domain architecture, MTTase N-terminal spans 8–118 (PKIGFVSLGC…VLQHVHHYVP (111 aa)). Positions 17, 53, 82, 150, 154, and 157 each coordinate [4Fe-4S] cluster. The Radical SAM core domain maps to 136–373 (LTPRHYAYLK…MQLQQQISAE (238 aa)). Positions 376–441 (QEKVGREILV…DEYDLWGSRV (66 aa)) constitute a TRAM domain.

This sequence belongs to the methylthiotransferase family. RimO subfamily. [4Fe-4S] cluster serves as cofactor.

It localises to the cytoplasm. It carries out the reaction L-aspartate(89)-[ribosomal protein uS12]-hydrogen + (sulfur carrier)-SH + AH2 + 2 S-adenosyl-L-methionine = 3-methylsulfanyl-L-aspartate(89)-[ribosomal protein uS12]-hydrogen + (sulfur carrier)-H + 5'-deoxyadenosine + L-methionine + A + S-adenosyl-L-homocysteine + 2 H(+). Functionally, catalyzes the methylthiolation of an aspartic acid residue of ribosomal protein uS12. The chain is Ribosomal protein uS12 methylthiotransferase RimO from Salmonella agona (strain SL483).